Here is a 263-residue protein sequence, read N- to C-terminus: MEDETELCFRSNKVTRLEMFVCTYGGKISSLACSHMELIKILQIAEPVKALNCNFGHQCLPGYESLIKTPKKTKNMLRRPRKTEGDGTCFNSAIEASILFKDKMYKLKCFPSTGEIQVPGVIFPDFEDGKNIIQQWVDFLQHQPIEKKIQIIEFKTIMINFKFQINPVSPRVIIHLKKFAALLEHIPTPYPIREIKPPLEDSKVSAKFMVSPGKKVRINVFLKGKINILGCNTKESAETIYTFLKDLISVHWQEILCVLPVPD.

Belongs to the asfivirus B263R family.

In terms of biological role, putative TATA-binding protein. The chain is Putative TATA-binding protein pB263R from African swine fever virus (isolate Warthog/Namibia/Wart80/1980) (ASFV).